Here is a 34-residue protein sequence, read N- to C-terminus: Photosystem II reaction center protein M (34 aa).

A helical transmembrane segment spans residues 5–25 (ILAFIATALFILVPTAFLLII).

It belongs to the PsbM family. PSII is composed of 1 copy each of membrane proteins PsbA, PsbB, PsbC, PsbD, PsbE, PsbF, PsbH, PsbI, PsbJ, PsbK, PsbL, PsbM, PsbT, PsbX, PsbY, PsbZ, Psb30/Ycf12, at least 3 peripheral proteins of the oxygen-evolving complex and a large number of cofactors. It forms dimeric complexes.

The protein resides in the plastid. The protein localises to the chloroplast thylakoid membrane. Functionally, one of the components of the core complex of photosystem II (PSII). PSII is a light-driven water:plastoquinone oxidoreductase that uses light energy to abstract electrons from H(2)O, generating O(2) and a proton gradient subsequently used for ATP formation. It consists of a core antenna complex that captures photons, and an electron transfer chain that converts photonic excitation into a charge separation. This subunit is found at the monomer-monomer interface. The chain is Photosystem II reaction center protein M from Cucumis sativus (Cucumber).